The primary structure comprises 205 residues: Small ribosomal subunit protein uS4 (205 aa).

The disordered stretch occupies residues 18–46 (NIWGRPKSPVNRREYGPGQHGQRRKGKLS). In terms of domain architecture, S4 RNA-binding spans 94–154 (RRLDAVVYRA…EASKQLAHVL (61 aa)).

Belongs to the universal ribosomal protein uS4 family. Part of the 30S ribosomal subunit. Contacts protein S5. The interaction surface between S4 and S5 is involved in control of translational fidelity.

Functionally, one of the primary rRNA binding proteins, it binds directly to 16S rRNA where it nucleates assembly of the body of the 30S subunit. Its function is as follows. With S5 and S12 plays an important role in translational accuracy. In Bradyrhizobium diazoefficiens (strain JCM 10833 / BCRC 13528 / IAM 13628 / NBRC 14792 / USDA 110), this protein is Small ribosomal subunit protein uS4.